Reading from the N-terminus, the 116-residue chain is UPF0482 protein PC1_2049 (116 aa).

A signal peptide spans 1-31; sequence MNHYSFSSLIRAFIPLSLVIVSAAWQPAALA.

Belongs to the UPF0482 family.

In Pectobacterium carotovorum subsp. carotovorum (strain PC1), this protein is UPF0482 protein PC1_2049.